A 795-amino-acid polypeptide reads, in one-letter code: Phenylalanine--tRNA ligase beta subunit (795 aa).

The 110-residue stretch at 39–148 (AGTFNGVVVG…LDAPIGTDLR (110 aa)) folds into the tRNA-binding domain. The B5 domain maps to 401–476 (PKVNTVQLRR…RIYGYNSIPN (76 aa)). Mg(2+) is bound by residues Asp-454, Asp-460, Glu-463, and Glu-464. Residues 701–794 (SKFPANRRDL…VKQRFNAELR (94 aa)) form the FDX-ACB domain.

This sequence belongs to the phenylalanyl-tRNA synthetase beta subunit family. Type 1 subfamily. Tetramer of two alpha and two beta subunits. It depends on Mg(2+) as a cofactor.

It localises to the cytoplasm. It carries out the reaction tRNA(Phe) + L-phenylalanine + ATP = L-phenylalanyl-tRNA(Phe) + AMP + diphosphate + H(+). The sequence is that of Phenylalanine--tRNA ligase beta subunit (pheT) from Haemophilus influenzae (strain ATCC 51907 / DSM 11121 / KW20 / Rd).